Reading from the N-terminus, the 150-residue chain is Deoxyuridine 5'-triphosphate nucleotidohydrolase (150 aa).

Substrate contacts are provided by residues 69 to 71, Asn82, 86 to 88, and Met96; these read RSG and LID.

The protein belongs to the dUTPase family. The cofactor is Mg(2+).

It carries out the reaction dUTP + H2O = dUMP + diphosphate + H(+). It participates in pyrimidine metabolism; dUMP biosynthesis; dUMP from dCTP (dUTP route): step 2/2. Its function is as follows. This enzyme is involved in nucleotide metabolism: it produces dUMP, the immediate precursor of thymidine nucleotides and it decreases the intracellular concentration of dUTP so that uracil cannot be incorporated into DNA. This is Deoxyuridine 5'-triphosphate nucleotidohydrolase from Acinetobacter baumannii (strain AB307-0294).